Reading from the N-terminus, the 231-residue chain is MIP18 family protein YHR122W (231 aa).

Disordered regions lie at residues 1-26 and 75-100; these read MSEF…DSTK and LTSD…EEEE. Position 2 is an N-acetylserine (Ser2). Acidic residues predominate over residues 76 to 90; sequence TSDEDSLPAESEDES.

Belongs to the MIP18 family.

Its function is as follows. May play a role in chromosome segregation through establishment of sister chromatid cohesion. This is MIP18 family protein YHR122W from Saccharomyces cerevisiae (strain ATCC 204508 / S288c) (Baker's yeast).